A 500-amino-acid chain; its full sequence is Pyoverdin chromophore biosynthetic protein PvcC (500 aa).

Requires FAD as cofactor.

The protein operates within siderophore biosynthesis; pyoverdin biosynthesis. The sequence is that of Pyoverdin chromophore biosynthetic protein PvcC (pvcC) from Pseudomonas aeruginosa (strain ATCC 15692 / DSM 22644 / CIP 104116 / JCM 14847 / LMG 12228 / 1C / PRS 101 / PAO1).